Consider the following 726-residue polypeptide: Probable pre-mRNA-splicing factor ATP-dependent RNA helicase DEAH2 (726 aa).

In terms of domain architecture, Helicase ATP-binding spans 71–240 (LKTLNNNQTL…FSGAPLMKVP (170 aa)). Residue 84 to 91 (GETGSGKT) participates in ATP binding. The short motif at 187–190 (DEAH) is the DEAH box element. The Helicase C-terminal domain maps to 265 to 445 (TVVQIHMCEP…NTVLTLKKLG (181 aa)).

This sequence belongs to the DEAD box helicase family. DEAH subfamily. PRP43 sub-subfamily.

The enzyme catalyses ATP + H2O = ADP + phosphate + H(+). Its function is as follows. May be involved in pre-mRNA splicing. This Arabidopsis thaliana (Mouse-ear cress) protein is Probable pre-mRNA-splicing factor ATP-dependent RNA helicase DEAH2.